Consider the following 172-residue polypeptide: Crossover junction endodeoxyribonuclease RuvC (172 aa).

Catalysis depends on residues Asp-11, Glu-71, and Asp-143. 3 residues coordinate Mg(2+): Asp-11, Glu-71, and Asp-143.

It belongs to the RuvC family. Homodimer which binds Holliday junction (HJ) DNA. The HJ becomes 2-fold symmetrical on binding to RuvC with unstacked arms; it has a different conformation from HJ DNA in complex with RuvA. In the full resolvosome a probable DNA-RuvA(4)-RuvB(12)-RuvC(2) complex forms which resolves the HJ. Requires Mg(2+) as cofactor.

It localises to the cytoplasm. It carries out the reaction Endonucleolytic cleavage at a junction such as a reciprocal single-stranded crossover between two homologous DNA duplexes (Holliday junction).. Functionally, the RuvA-RuvB-RuvC complex processes Holliday junction (HJ) DNA during genetic recombination and DNA repair. Endonuclease that resolves HJ intermediates. Cleaves cruciform DNA by making single-stranded nicks across the HJ at symmetrical positions within the homologous arms, yielding a 5'-phosphate and a 3'-hydroxyl group; requires a central core of homology in the junction. The consensus cleavage sequence is 5'-(A/T)TT(C/G)-3'. Cleavage occurs on the 3'-side of the TT dinucleotide at the point of strand exchange. HJ branch migration catalyzed by RuvA-RuvB allows RuvC to scan DNA until it finds its consensus sequence, where it cleaves and resolves the cruciform DNA. The sequence is that of Crossover junction endodeoxyribonuclease RuvC from Brucella anthropi (strain ATCC 49188 / DSM 6882 / CCUG 24695 / JCM 21032 / LMG 3331 / NBRC 15819 / NCTC 12168 / Alc 37) (Ochrobactrum anthropi).